Consider the following 668-residue polypeptide: Trehalase (668 aa).

A disordered region spans residues 1 to 23; sequence MVLQQTEPTDGADRKASDGPLTV.

The protein belongs to the glycosyl hydrolase 15 family. As to quaternary structure, homomultimer of 20 or more subunits. Mg(2+) is required as a cofactor. Phosphate serves as cofactor.

The enzyme catalyses alpha,alpha-trehalose + H2O = alpha-D-glucose + beta-D-glucose. Its pathway is glycan degradation; trehalose degradation; D-glucose from alpha,alpha-trehalose: step 1/1. Its activity is regulated as follows. Inhibited by pyrophosphate and polyphosphates. Also competitively inhibited by validoxylamine and castanospermine, but not by trehazolin. Its function is as follows. Catalyzes the hydrolysis of alpha,alpha-trehalose into two molecules of D-glucose. Does not hydrolyze maltose, isomaltose, sucrose, cellobiose, p-nitrophenyl-alpha-D-glucopyranoside, and methyl-alpha-D-glucopyranoside. Is also inactive on alpha,beta-trehalose, beta,beta-trehalose, alpha,alpha-trehalose-6,6'-dibehenate, trehalulose, nigerose, and trehalose dimycolate. This Mycolicibacterium smegmatis (strain ATCC 700084 / mc(2)155) (Mycobacterium smegmatis) protein is Trehalase.